The primary structure comprises 396 residues: S-adenosylmethionine synthase (396 aa).

Histidine 15 is an ATP binding site. Position 17 (aspartate 17) interacts with Mg(2+). Glutamate 43 contributes to the K(+) binding site. The L-methionine site is built by glutamate 56 and glutamine 99. The segment at 99–109 (QSGDIAQGVDT) is flexible loop. ATP contacts are provided by residues 173–175 (DGK), 241–242 (RF), aspartate 250, 256–257 (RK), alanine 273, and lysine 277. Aspartate 250 is an L-methionine binding site. Lysine 281 is an L-methionine binding site.

This sequence belongs to the AdoMet synthase family. In terms of assembly, homotetramer; dimer of dimers. Mg(2+) is required as a cofactor. Requires K(+) as cofactor.

Its subcellular location is the cytoplasm. It catalyses the reaction L-methionine + ATP + H2O = S-adenosyl-L-methionine + phosphate + diphosphate. Its pathway is amino-acid biosynthesis; S-adenosyl-L-methionine biosynthesis; S-adenosyl-L-methionine from L-methionine: step 1/1. In terms of biological role, catalyzes the formation of S-adenosylmethionine (AdoMet) from methionine and ATP. The overall synthetic reaction is composed of two sequential steps, AdoMet formation and the subsequent tripolyphosphate hydrolysis which occurs prior to release of AdoMet from the enzyme. In Nocardioides sp. (strain ATCC BAA-499 / JS614), this protein is S-adenosylmethionine synthase.